Consider the following 535-residue polypeptide: CTP synthase (535 aa).

Residues 1 to 267 (MTKYIFVTGG…DSLVCSHLKL (267 aa)) form an amidoligase domain region. CTP is bound at residue S13. Position 13 (S13) interacts with UTP. 14-19 (SLGKGI) contacts ATP. L-glutamine is bound at residue Y54. Residue D71 coordinates ATP. The Mg(2+) site is built by D71 and E141. CTP contacts are provided by residues 148–150 (DIE), 188–193 (KTKPTQ), and K224. UTP is bound by residues 188–193 (KTKPTQ) and K224. The Glutamine amidotransferase type-1 domain occupies 292-534 (TIALVGKYVE…VHASLKTSEK (243 aa)). G354 lines the L-glutamine pocket. C381 serves as the catalytic Nucleophile; for glutamine hydrolysis. Residues 382–385 (LGMQ), E405, and R462 contribute to the L-glutamine site. Catalysis depends on residues H507 and E509.

Belongs to the CTP synthase family. In terms of assembly, homotetramer.

The enzyme catalyses UTP + L-glutamine + ATP + H2O = CTP + L-glutamate + ADP + phosphate + 2 H(+). It catalyses the reaction L-glutamine + H2O = L-glutamate + NH4(+). It carries out the reaction UTP + NH4(+) + ATP = CTP + ADP + phosphate + 2 H(+). It participates in pyrimidine metabolism; CTP biosynthesis via de novo pathway; CTP from UDP: step 2/2. Allosterically activated by GTP, when glutamine is the substrate; GTP has no effect on the reaction when ammonia is the substrate. The allosteric effector GTP functions by stabilizing the protein conformation that binds the tetrahedral intermediate(s) formed during glutamine hydrolysis. Inhibited by the product CTP, via allosteric rather than competitive inhibition. Functionally, catalyzes the ATP-dependent amination of UTP to CTP with either L-glutamine or ammonia as the source of nitrogen. Regulates intracellular CTP levels through interactions with the four ribonucleotide triphosphates. The protein is CTP synthase of Bacillus licheniformis (strain ATCC 14580 / DSM 13 / JCM 2505 / CCUG 7422 / NBRC 12200 / NCIMB 9375 / NCTC 10341 / NRRL NRS-1264 / Gibson 46).